A 91-amino-acid chain; its full sequence is Cell division protein FtsB (91 aa).

Topologically, residues Met-1–Trp-3 are cytoplasmic. Residues Pro-4 to Leu-21 form a helical membrane-spanning segment. Residues Gly-22–Pro-91 are Periplasmic-facing. Residues Arg-28 to Glu-74 adopt a coiled-coil conformation.

Belongs to the FtsB family. Part of a complex composed of FtsB, FtsL and FtsQ.

The protein resides in the cell inner membrane. Essential cell division protein. May link together the upstream cell division proteins, which are predominantly cytoplasmic, with the downstream cell division proteins, which are predominantly periplasmic. This Aromatoleum aromaticum (strain DSM 19018 / LMG 30748 / EbN1) (Azoarcus sp. (strain EbN1)) protein is Cell division protein FtsB.